The primary structure comprises 133 residues: Putative HTH-type transcriptional regulator YwnA (133 aa).

The HTH rrf2-type domain occupies 1–130 (MINSRLAVAI…ASKSLKDVMN (130 aa)). The H-T-H motif DNA-binding region spans 24–47 (SEIIADSVNTNPVVVRRMISLLKK).

In Bacillus subtilis (strain 168), this protein is Putative HTH-type transcriptional regulator YwnA (ywnA).